The primary structure comprises 199 residues: UPF0637 protein LACR_1918 (199 aa).

Belongs to the UPF0637 family.

This chain is UPF0637 protein LACR_1918, found in Lactococcus lactis subsp. cremoris (strain SK11).